Here is a 1087-residue protein sequence, read N- to C-terminus: Exportin-7-B (1087 aa).

The region spanning 30–96 (AEKALVEFTN…RNYVLTYLAT (67 aa)) is the Importin N-terminal domain.

This sequence belongs to the exportin family.

It localises to the cytoplasm. The protein resides in the nucleus. Mediates the nuclear export of proteins (cargos) with broad substrate specificity. This is Exportin-7-B (xpo7-b) from Xenopus laevis (African clawed frog).